The primary structure comprises 1483 residues: Dynein axonemal assembly factor 1 homolog (1483 aa).

LRR repeat units lie at residues arginine 34 to threonine 56, glutamate 57 to serine 78, lysine 79 to arginine 100, glutamate 101 to valine 122, valine 125 to isoleucine 146, and threonine 150 to glutamate 171. An LRRCT domain is found at proline 185–tryptophan 223. Disordered regions lie at residues serine 249–glutamate 282, glutamate 300–serine 327, aspartate 945–lysine 986, and serine 1167–aspartate 1213. Polar residues predominate over residues aspartate 311–serine 327. Positions threonine 1183–glycine 1196 are enriched in basic and acidic residues.

Belongs to the DNAAF1 family.

It localises to the cell projection. It is found in the cilium. Its function is as follows. Cilium-specific protein required for cilia structures. The sequence is that of Dynein axonemal assembly factor 1 homolog (dtr) from Drosophila melanogaster (Fruit fly).